The chain runs to 545 residues: MKKRILVTCAFPYANGSLHIGHFLEHIQADIWVRYKKMRGHEVWFICADDAHGTPIMLKSQSLKMSPESFISDIYKDHVNDLEKFNINYDNYYSTHSSENSYFLKKIYHILDKKGLIQTRNIFQLFDNTKRVFLPDRFVKGACPICHTKDQYGDHCEVCGSSYSAVELIKPVSMLSGNCPILKKSLHFFFNLPYFESMLRSWVMSGVLQASVVKKLDEWFKLGLREWDISRDSPYFGFNIPGFLDKYFYVWLDAPIGYISTFKNLCTQRNNLNFLDFWKKNSECELYQFIGKDIVYFHSLFWPSILEASNFRKPTKIFVHGHVTINGLKLSKSRGDCILAKNWIKNLDSDSLRYYYASKLSSKIQDIEVNAKHFLYKINSDVVNKIVNLASRVSSFINIYFNNELSSRIDDLALYKRFVTSSSYIEKMLENCEFNSAISMVISLADIANSYVDNKKPWNLTKNIKNSNTLHDICTTVLNLFRILMTWLKPVMPDLAKNSEKFLNIKLEWANICIPLLNHKISIFKALRHRIEDKQIKFLLPNNFE.

The 'HIGH' region motif lies at 12 to 22; sequence PYANGSLHIGH. Zn(2+) contacts are provided by C143, C146, C156, and C159. Residues 329-333 carry the 'KMSKS' region motif; that stretch reads KLSKS. Position 332 (K332) interacts with ATP.

Belongs to the class-I aminoacyl-tRNA synthetase family. MetG type 1 subfamily. Monomer. Requires Zn(2+) as cofactor.

It localises to the cytoplasm. The catalysed reaction is tRNA(Met) + L-methionine + ATP = L-methionyl-tRNA(Met) + AMP + diphosphate. Functionally, is required not only for elongation of protein synthesis but also for the initiation of all mRNA translation through initiator tRNA(fMet) aminoacylation. In Buchnera aphidicola subsp. Baizongia pistaciae (strain Bp), this protein is Methionine--tRNA ligase (metG).